A 350-amino-acid polypeptide reads, in one-letter code: Flap endonuclease 1 (350 aa).

Residues 1–102 (MGVTELGKLI…IEIEKRRRVR (102 aa)) are N-domain. Positions 31, 84, 156, 158, 177, 179, and 241 each coordinate Mg(2+). An I-domain region spans residues 120 to 263 (EARKYAQRAL…RALRLIQEYG (144 aa)).

It belongs to the XPG/RAD2 endonuclease family. FEN1 subfamily. In terms of assembly, interacts with PCNA. PCNA stimulates the nuclease activity without altering cleavage specificity. Mg(2+) serves as cofactor.

In terms of biological role, structure-specific nuclease with 5'-flap endonuclease and 5'-3' exonuclease activities involved in DNA replication and repair. During DNA replication, cleaves the 5'-overhanging flap structure that is generated by displacement synthesis when DNA polymerase encounters the 5'-end of a downstream Okazaki fragment. Binds the unpaired 3'-DNA end and kinks the DNA to facilitate 5' cleavage specificity. Cleaves one nucleotide into the double-stranded DNA from the junction in flap DNA, leaving a nick for ligation. Also involved in the base excision repair (BER) pathway. Acts as a genome stabilization factor that prevents flaps from equilibrating into structures that lead to duplications and deletions. Also possesses 5'-3' exonuclease activity on nicked or gapped double-stranded DNA. The protein is Flap endonuclease 1 of Caldivirga maquilingensis (strain ATCC 700844 / DSM 13496 / JCM 10307 / IC-167).